The primary structure comprises 130 residues: MYRALTRDIEVTVEPFYLAEQSDPEDSRYVWGYRVVIVNQSNVAVRLINRYWHITDQNGQVDEVSGPGVIGEQPRLAPGESFEYSSGCPLDTPSGIMFGRYEMETDDAETFDVAIPAFSLDTPDLRRVLN.

Positions 3 to 127 constitute an ApaG domain; that stretch reads RALTRDIEVT…FSLDTPDLRR (125 aa).

The chain is Protein ApaG from Allorhizobium ampelinum (strain ATCC BAA-846 / DSM 112012 / S4) (Agrobacterium vitis (strain S4)).